Reading from the N-terminus, the 472-residue chain is Bifunctional protein HldE (472 aa).

The interval Met-1 to Asn-315 is ribokinase. Asn-192–Glu-195 serves as a coordination point for ATP. Residue Asp-260 is part of the active site. The cytidylyltransferase stretch occupies residues Phe-340–Lys-472.

This sequence in the N-terminal section; belongs to the carbohydrate kinase PfkB family. It in the C-terminal section; belongs to the cytidylyltransferase family. Homodimer.

It catalyses the reaction D-glycero-beta-D-manno-heptose 7-phosphate + ATP = D-glycero-beta-D-manno-heptose 1,7-bisphosphate + ADP + H(+). It carries out the reaction D-glycero-beta-D-manno-heptose 1-phosphate + ATP + H(+) = ADP-D-glycero-beta-D-manno-heptose + diphosphate. It participates in nucleotide-sugar biosynthesis; ADP-L-glycero-beta-D-manno-heptose biosynthesis; ADP-L-glycero-beta-D-manno-heptose from D-glycero-beta-D-manno-heptose 7-phosphate: step 1/4. It functions in the pathway nucleotide-sugar biosynthesis; ADP-L-glycero-beta-D-manno-heptose biosynthesis; ADP-L-glycero-beta-D-manno-heptose from D-glycero-beta-D-manno-heptose 7-phosphate: step 3/4. Functionally, catalyzes the phosphorylation of D-glycero-D-manno-heptose 7-phosphate at the C-1 position to selectively form D-glycero-beta-D-manno-heptose-1,7-bisphosphate. Its function is as follows. Catalyzes the ADP transfer from ATP to D-glycero-beta-D-manno-heptose 1-phosphate, yielding ADP-D-glycero-beta-D-manno-heptose. This is Bifunctional protein HldE from Campylobacter concisus (strain 13826).